Here is a 517-residue protein sequence, read N- to C-terminus: Putative ribose/galactose/methyl galactoside import ATP-binding protein 1 (517 aa).

2 ABC transporter domains span residues 23 to 258 (LQLQ…VGRP) and 269 to 515 (TPTD…SGRS). 55-62 (GENGAGKS) lines the ATP pocket.

It belongs to the ABC transporter superfamily. Carbohydrate importer 2 (CUT2) (TC 3.A.1.2) family.

Its subcellular location is the cell inner membrane. The enzyme catalyses D-ribose(out) + ATP + H2O = D-ribose(in) + ADP + phosphate + H(+). It catalyses the reaction D-galactose(out) + ATP + H2O = D-galactose(in) + ADP + phosphate + H(+). Its function is as follows. Part of an ABC transporter complex involved in carbohydrate import. Could be involved in ribose, galactose and/or methyl galactoside import. Responsible for energy coupling to the transport system. In Burkholderia ambifaria (strain ATCC BAA-244 / DSM 16087 / CCUG 44356 / LMG 19182 / AMMD) (Burkholderia cepacia (strain AMMD)), this protein is Putative ribose/galactose/methyl galactoside import ATP-binding protein 1.